We begin with the raw amino-acid sequence, 899 residues long: Auxin response factor 25 (899 aa).

Residues 1-20 (MKLSPPASADMPQALPENDG) are disordered. The TF-B3 DNA-binding region spans 132 to 234 (FCKTLTASDT…QLLLGIRRAN (103 aa)). The span at 546–564 (RQHVLQEQSSQEMQQQLPS) shows a compositional bias: low complexity. The tract at residues 546 to 586 (RQHVLQEQSSQEMQQQLPSSDHHVADVASESGSAPQAQSSL) is disordered. Polar residues predominate over residues 575–586 (ESGSAPQAQSSL). One can recognise a PB1 domain in the interval 766–850 (ATFVKVYKSG…WCIKILSPQE (85 aa)).

Belongs to the ARF family. Homodimers and heterodimers. Expressed in roots, culms, leaves and young panicles.

The protein localises to the nucleus. Functionally, auxin response factors (ARFs) are transcriptional factors that bind specifically to the DNA sequence 5'-TGTCTC-3' found in the auxin-responsive promoter elements (AuxREs). In Oryza sativa subsp. japonica (Rice), this protein is Auxin response factor 25 (ARF25).